The primary structure comprises 156 residues: Transmembrane protein 50 homolog (156 aa).

4 helical membrane passes run 5 to 25 (IMKY…FLWI), 45 to 65 (IQWI…MANI), 87 to 107 (VWLF…LWIM), and 124 to 144 (PGIA…LLVF).

Belongs to the UPF0220 family.

It localises to the membrane. In Dictyostelium discoideum (Social amoeba), this protein is Transmembrane protein 50 homolog (tmem50).